Reading from the N-terminus, the 97-residue chain is Na(+)/H(+) antiporter subunit F1 (97 aa).

Transmembrane regions (helical) follow at residues 3 to 23 (FKIF…AMLI), 35 to 55 (VVAL…FSIL), and 60 to 80 (YMLV…AVFS).

It belongs to the CPA3 antiporters (TC 2.A.63) subunit F family. As to quaternary structure, may form a heterooligomeric complex that consists of seven subunits: mnhA1, mnhB1, mnhC1, mnhD1, mnhE1, mnhF1 and mnhG1.

Its subcellular location is the cell membrane. Mnh complex is a Na(+)/H(+) antiporter involved in Na(+) excretion. In Staphylococcus epidermidis (strain ATCC 35984 / DSM 28319 / BCRC 17069 / CCUG 31568 / BM 3577 / RP62A), this protein is Na(+)/H(+) antiporter subunit F1 (mnhF1).